The primary structure comprises 257 residues: Aspartate/glutamate leucyltransferase (257 aa).

It belongs to the R-transferase family. Bpt subfamily.

The protein localises to the cytoplasm. It catalyses the reaction N-terminal L-glutamyl-[protein] + L-leucyl-tRNA(Leu) = N-terminal L-leucyl-L-glutamyl-[protein] + tRNA(Leu) + H(+). The enzyme catalyses N-terminal L-aspartyl-[protein] + L-leucyl-tRNA(Leu) = N-terminal L-leucyl-L-aspartyl-[protein] + tRNA(Leu) + H(+). Functionally, functions in the N-end rule pathway of protein degradation where it conjugates Leu from its aminoacyl-tRNA to the N-termini of proteins containing an N-terminal aspartate or glutamate. The protein is Aspartate/glutamate leucyltransferase of Sphingopyxis alaskensis (strain DSM 13593 / LMG 18877 / RB2256) (Sphingomonas alaskensis).